Reading from the N-terminus, the 167-residue chain is Keratin-associated protein 1-3 (167 aa).

Belongs to the KRTAP type 1 family. As to quaternary structure, interacts with hair keratins. Expressed in the middle/upper portions of the hair cortex, in the region termed the keratogenous zone.

Functionally, in the hair cortex, hair keratin intermediate filaments are embedded in an interfilamentous matrix, consisting of hair keratin-associated proteins (KRTAP), which are essential for the formation of a rigid and resistant hair shaft through their extensive disulfide bond cross-linking with abundant cysteine residues of hair keratins. The matrix proteins include the high-sulfur and high-glycine-tyrosine keratins. The polypeptide is Keratin-associated protein 1-3 (KRTAP1-3) (Homo sapiens (Human)).